The following is a 454-amino-acid chain: Epsin-1 (454 aa).

Residues 11–143 enclose the ENTH domain; the sequence is NLVKGYSSTQ…SDDERLNEER (133 aa). Disordered stretches follow at residues 142–195 and 292–350; these read ERNM…EDYE and YLAS…GNQS. Over residues 149 to 160 the composition is skewed to basic residues; that stretch reads GRNRKGRRRRGT. T160 carries the post-translational modification Phosphothreonine. S163 bears the Phosphoserine mark. 2 UIM domains span residues 165–184 and 189–208; these read ENDD…AEED and KQDE…EELK. Residue T180 is modified to Phosphothreonine. Basic and acidic residues predominate over residues 180–191; sequence TAEEDERRRKQD. Residues 292–302 show a composition bias toward low complexity; the sequence is YLASMQQQQQA. Polar residues-rich tracts occupy residues 303–329 and 340–350; these read MSNN…ASSP and PLIQNRTGNQS. S328 carries the phosphoserine modification. Residue K357 forms a Glycyl lysine isopeptide (Lys-Gly) (interchain with G-Cter in ubiquitin) linkage. 5 positions are modified to phosphothreonine: T364, T366, T384, T386, and T388. A compositionally biased stretch (polar residues) spans 384-398; sequence TKTGTFINSQGTGYR. The tract at residues 384 to 405 is disordered; it reads TKTGTFINSQGTGYRQVSDDPN. T395 and T415 each carry phosphothreonine; by PRK1. Residues 418 to 428 are compositionally biased toward polar residues; it reads PSTSVVPTQTG. The tract at residues 418-454 is disordered; it reads PSTSVVPTQTGYGFGNQSQQQSQNNGSNNRGYTLIDL. Low complexity predominate over residues 432–446; that stretch reads GNQSQQQSQNNGSNN. The tract at residues 447-454 is clathrin-binding; the sequence is RGYTLIDL.

This sequence belongs to the epsin family. Interacts with EDE1 and PAN1.

It is found in the cytoplasm. The protein localises to the membrane. In terms of biological role, binds to membranes enriched in phosphatidylinositol 3,5-bisphosphate (PtdIns(3,5)P2) and phosphatidylinositol 4,5-bisphosphate (PtdIns(4,5)P2). Required for endocytosis and localization of actin. Negatively regulated via phosphorylation. In Saccharomyces cerevisiae (strain ATCC 204508 / S288c) (Baker's yeast), this protein is Epsin-1 (ENT1).